The primary structure comprises 207 residues: Glycerol-3-phosphate acyltransferase (207 aa).

Transmembrane regions (helical) follow at residues 3–23 (LIGL…VWVG), 54–74 (TIVM…PIVF), 81–101 (GTAT…VSIF), 122–142 (PIMF…TSIV), and 158–178 (LVFQ…FVFY).

Belongs to the PlsY family. As to quaternary structure, probably interacts with PlsX.

The protein resides in the cell membrane. It catalyses the reaction an acyl phosphate + sn-glycerol 3-phosphate = a 1-acyl-sn-glycero-3-phosphate + phosphate. Its pathway is lipid metabolism; phospholipid metabolism. Functionally, catalyzes the transfer of an acyl group from acyl-phosphate (acyl-PO(4)) to glycerol-3-phosphate (G3P) to form lysophosphatidic acid (LPA). This enzyme utilizes acyl-phosphate as fatty acyl donor, but not acyl-CoA or acyl-ACP. This chain is Glycerol-3-phosphate acyltransferase, found in Levilactobacillus brevis (strain ATCC 367 / BCRC 12310 / CIP 105137 / JCM 1170 / LMG 11437 / NCIMB 947 / NCTC 947) (Lactobacillus brevis).